Consider the following 203-residue polypeptide: UPF0637 protein SERP0693 (203 aa).

The protein belongs to the UPF0637 family.

In Staphylococcus epidermidis (strain ATCC 35984 / DSM 28319 / BCRC 17069 / CCUG 31568 / BM 3577 / RP62A), this protein is UPF0637 protein SERP0693.